Reading from the N-terminus, the 368-residue chain is MNSIYAFANQNIIRVQLTDVKAPYTINIKGPYKAYNYKYESEIISALTNETVMVVENRLGLKVNEVGVYKEGIVFETQDGFTLNGIEYYGSLMFIPYNDTMIVVNELNIEDYVKGVLPHEMSPDWPMEALKAQAVAARTYAMYHILKNANKLPFDVDNTTKYQVYNGKEKMNWSVEQAVDRTRYEIAVYKGKVIATYFSALCGGHTDSAENVFGVAVPYLGGVACPYCNAQIKPWTNALSYNELNNDLANYSVHATEKSSIGISTDPKSGKATNIKIDNNDITSRDFRTTLSPRLVPSLNFTIKKVDNGIIITGKGSGHGVGMCQWGAYGMAQVKKDYKEILKFYYNGVDIVDYNRVNKEFEPDVWGN.

Its function is as follows. Might be involved in sporulation. This is an uncharacterized protein from Brachyspira hyodysenteriae (strain ATCC 49526 / WA1).